The sequence spans 351 residues: Small ribosomal subunit biogenesis GTPase RsgA 1 (351 aa).

The CP-type G domain maps to 100–258 (LRTDAQIVAS…IIDTPGMREL (159 aa)). GTP is bound by residues 148-151 (SKVD) and 200-208 (GSSGAGKST). Positions 282, 287, 289, and 295 each coordinate Zn(2+).

The protein belongs to the TRAFAC class YlqF/YawG GTPase family. RsgA subfamily. As to quaternary structure, monomer. Associates with 30S ribosomal subunit, binds 16S rRNA. Zn(2+) serves as cofactor.

The protein localises to the cytoplasm. One of several proteins that assist in the late maturation steps of the functional core of the 30S ribosomal subunit. Helps release RbfA from mature subunits. May play a role in the assembly of ribosomal proteins into the subunit. Circularly permuted GTPase that catalyzes slow GTP hydrolysis, GTPase activity is stimulated by the 30S ribosomal subunit. The polypeptide is Small ribosomal subunit biogenesis GTPase RsgA 1 (Oceanobacillus iheyensis (strain DSM 14371 / CIP 107618 / JCM 11309 / KCTC 3954 / HTE831)).